A 522-amino-acid chain; its full sequence is Solute carrier family 2, facilitated glucose transporter member 2 (522 aa).

Residues 1 to 10 (MSEDKITGTL) lie on the Cytoplasmic side of the membrane. A helical membrane pass occupies residues 11–31 (AFTVFTAVLGSFQFGYDIGVI). The Extracellular portion of the chain corresponds to 32 to 96 (NAPQEVIISH…SAHIVTMLWS (65 aa)). N62 is a glycosylation site (N-linked (GlcNAc...) asparagine). Residues 97–117 (LSVSSFAVGGMVASFFGGWLG) form a helical membrane-spanning segment. At 118 to 125 (DKLGRIKA) the chain is on the cytoplasmic side. The helical transmembrane segment at 126–146 (MLAANSLSLTGALLMGCSKFG) threads the bilayer. Over 147-156 (PAHALIIAGR) the chain is Extracellular. A helical transmembrane segment spans residues 157–177 (SVSGLYCGLISGLVPMYIGEI). Topologically, residues 178–185 (APTTLRGA) are cytoplasmic. Residues 186-206 (LGTLHQLALVTGILISQIAGL) traverse the membrane as a helical segment. D-glucose is bound at residue Q191. At 207-215 (SFILGNQDY) the chain is on the extracellular side. A helical membrane pass occupies residues 216–236 (WHILLGLSAVPALLQCLLLLF). Residues 237–301 (CPESPRYLYL…LFTDPNYRQP (65 aa)) are Cytoplasmic-facing. The chain crosses the membrane as a helical span at residues 302 to 322 (IVVALMLHLAQQFSGINGIFY). Residues 312-313 (QQ) and N318 each bind D-glucose. Topologically, residues 323–337 (YSTSIFQTAGISQPV) are extracellular. The helical transmembrane segment at 338–358 (YATIGVGAINMIFTAVSVLLV) threads the bilayer. Residue N347 coordinates D-glucose. Residues 359 to 365 (EKAGRRT) are Cytoplasmic-facing. Residues 366 to 386 (LFLAGMIGMFFCAVFMSLGLV) traverse the membrane as a helical segment. At 387–401 (LLDKFTWMSYVSMTA) the chain is on the extracellular side. Residues 402-422 (IFLFVSFFEIGPGPIPWFMVA) form a helical membrane-spanning segment. The D-glucose site is built by E410 and W418. At 423–431 (EFFSQGPRP) the chain is on the cytoplasmic side. A helical membrane pass occupies residues 432-452 (TALALAAFSNWVCNFIIALCF). Residues 453–459 (QYIADFL) lie on the Extracellular side of the membrane. Residues 460–480 (GPYVFFLFAGVVLVFTLFTFF) form a helical membrane-spanning segment. Residues 481-522 (KVPETKGKSFDEIAAEFRKKSGSAPPRKATVQMEFLGSSETV) lie on the Cytoplasmic side of the membrane. T521 is modified (phosphothreonine).

It belongs to the major facilitator superfamily. Sugar transporter (TC 2.A.1.1) family. Glucose transporter subfamily. N-glycosylated; required for stability and retention at the cell surface of pancreatic beta cells. Present in liver, intestine, kidney and beta-pancreatic islet cells.

It localises to the cell membrane. It carries out the reaction D-glucose(out) = D-glucose(in). The catalysed reaction is D-fructose(out) = D-fructose(in). The enzyme catalyses L-dehydroascorbate(out) = L-dehydroascorbate(in). It catalyses the reaction D-galactose(in) = D-galactose(out). Its activity is regulated as follows. D-glucose and maltose competitively inhibit fructose transport. D-glucose, D-fructose and maltose inhibit deoxyglucose transport. Functionally, facilitative hexose transporter that mediates the transport of glucose, fructose and galactose. Likely mediates the bidirectional transfer of glucose across the plasma membrane of hepatocytes and is responsible for uptake of glucose by the beta cells; may comprise part of the glucose-sensing mechanism of the beta cell. May also participate with the Na(+)/glucose cotransporter in the transcellular transport of glucose in the small intestine and kidney. Also able to mediate the transport of dehydroascorbate. The protein is Solute carrier family 2, facilitated glucose transporter member 2 of Rattus norvegicus (Rat).